We begin with the raw amino-acid sequence, 460 residues long: Chromosomal replication initiator protein DnaA (460 aa).

The segment at 1 to 84 (MAVSLWQQCI…RFDIGSRPSA (84 aa)) is domain I, interacts with DnaA modulators. Positions 84–123 (AKKPEPAPVAAVRVPNPQTKASVGTSFNTTEPVVNANHRS) are domain II. Residues 124–340 (NINPTYQFDN…GALNRVIANA (217 aa)) are domain III, AAA+ region. Residues Gly168, Gly170, Lys171, and Thr172 each coordinate ATP. The interval 341-460 (NFTGRPITID…YANLIRTLSS (120 aa)) is domain IV, binds dsDNA.

It belongs to the DnaA family. As to quaternary structure, oligomerizes as a right-handed, spiral filament on DNA at oriC.

It localises to the cytoplasm. Plays an essential role in the initiation and regulation of chromosomal replication. ATP-DnaA binds to the origin of replication (oriC) to initiate formation of the DNA replication initiation complex once per cell cycle. Binds the DnaA box (a 9 base pair repeat at the origin) and separates the double-stranded (ds)DNA. Forms a right-handed helical filament on oriC DNA; dsDNA binds to the exterior of the filament while single-stranded (ss)DNA is stabiized in the filament's interior. The ATP-DnaA-oriC complex binds and stabilizes one strand of the AT-rich DNA unwinding element (DUE), permitting loading of DNA polymerase. After initiation quickly degrades to an ADP-DnaA complex that is not apt for DNA replication. Binds acidic phospholipids. The polypeptide is Chromosomal replication initiator protein DnaA (Shewanella sp. (strain MR-7)).